A 368-amino-acid chain; its full sequence is Chorismate synthase (368 aa).

Residues R48 and R54 each coordinate NADP(+). Residues 131–133 (RSS), 243–244 (NA), G292, 307–311 (KPTSS), and R333 each bind FMN.

It belongs to the chorismate synthase family. Homotetramer. The cofactor is FMNH2.

It catalyses the reaction 5-O-(1-carboxyvinyl)-3-phosphoshikimate = chorismate + phosphate. It participates in metabolic intermediate biosynthesis; chorismate biosynthesis; chorismate from D-erythrose 4-phosphate and phosphoenolpyruvate: step 7/7. Functionally, catalyzes the anti-1,4-elimination of the C-3 phosphate and the C-6 proR hydrogen from 5-enolpyruvylshikimate-3-phosphate (EPSP) to yield chorismate, which is the branch point compound that serves as the starting substrate for the three terminal pathways of aromatic amino acid biosynthesis. This reaction introduces a second double bond into the aromatic ring system. The sequence is that of Chorismate synthase from Nitrobacter winogradskyi (strain ATCC 25391 / DSM 10237 / CIP 104748 / NCIMB 11846 / Nb-255).